Reading from the N-terminus, the 537-residue chain is [Pyruvate dehydrogenase [acetyl-transferring]]-phosphatase 1, mitochondrial (537 aa).

The transit peptide at 1–71 (MPAPTQLFFP…WWHYTQGRRY (71 aa)) directs the protein to the mitochondrion. A PPM-type phosphatase domain is found at 109–525 (ILGFDSNQLP…DDITIIVVQF (417 aa)). Residues Asp-144 and Gly-145 each coordinate Mn(2+). Residue Lys-202 is modified to N6-acetyllysine. Residues Asp-418 and Asp-516 each contribute to the Mn(2+) site.

It belongs to the PP2C family. As to quaternary structure, heterodimer of a catalytic (PDP1) and a regulatory (PDPR) subunit. The cofactor is Mn(2+). Mg(2+) serves as cofactor.

The protein resides in the mitochondrion. The enzyme catalyses O-phospho-L-seryl-[pyruvate dehydrogenase E1 alpha subunit] + H2O = L-seryl-[pyruvate dehydrogenase E1 alpha subunit] + phosphate. Magnesium-dependent and calcium-stimulated. PDP1 activity strongly depends on its Ca(2+)-dependent binding to the lipoyl domain of E2 subunit of component of the pyruvate dehydrogenase complex. Its function is as follows. Mitochondrial enzyme that catalyzes the dephosphorylation and concomitant reactivation of the alpha subunit of the E1 component of the pyruvate dehydrogenase complex (PDC), thereby stimulating the conversion of pyruvate into acetyl-CoA. The polypeptide is [Pyruvate dehydrogenase [acetyl-transferring]]-phosphatase 1, mitochondrial (PDP1) (Pongo abelii (Sumatran orangutan)).